The primary structure comprises 2710 residues: Serine/threonine-protein kinase ATR (2710 aa).

The region spanning Thr-1647–Ser-2257 is the FAT domain. A PI3K/PI4K catalytic domain is found at Ile-2368–Leu-2680. The interval Ile-2374–Lys-2380 is G-loop. Residues Gly-2545 to Asn-2553 are catalytic loop. An activation loop region spans residues His-2565–Thr-2589. The region spanning Leu-2678–Phe-2710 is the FATC domain.

This sequence belongs to the PI3/PI4-kinase family. ATM subfamily.

The protein localises to the nucleus. It carries out the reaction L-seryl-[protein] + ATP = O-phospho-L-seryl-[protein] + ADP + H(+). The catalysed reaction is L-threonyl-[protein] + ATP = O-phospho-L-threonyl-[protein] + ADP + H(+). Functionally, probable serine/threonine kinase. Seems to play a central role in cell-cycle regulation by transmitting DNA damage signals to downstream effectors of cell-cycle progression. May recognize the substrate consensus sequence [ST]-Q and phosphorylate histone variant H2AX to form H2AXS139ph at sites of DNA damage, thereby regulating DNA damage response mechanism. The protein is Serine/threonine-protein kinase ATR of Oryza sativa subsp. indica (Rice).